The following is a 1058-amino-acid chain: Carbamoyl phosphate synthase large chain (1058 aa).

The tract at residues 1-401 (MPKRKDIQKI…SLLKACRSLE (401 aa)) is carboxyphosphate synthetic domain. ATP is bound by residues Arg129, Arg169, Gly175, Gly176, Arg208, Ile210, Glu215, Gly241, Ile242, His243, Gln284, and Glu298. The ATP-grasp 1 domain maps to 133-327 (KQLMQELDQP…IAKLAAKIAV (195 aa)). Mg(2+) contacts are provided by Gln284, Glu298, and Asn300. Mn(2+) is bound by residues Gln284, Glu298, and Asn300. The tract at residues 402–546 (IGVCHNEMTS…YSTYELENES (145 aa)) is oligomerization domain. A carbamoyl phosphate synthetic domain region spans residues 547 to 929 (VQSNKESILV…ALYKAFEANN (383 aa)). Residues 671 to 861 (EKALKELGIP…MAQIATKLIL (191 aa)) form the ATP-grasp 2 domain. 10 residues coordinate ATP: Arg707, Ser746, Ile748, Glu752, Gly777, Val778, His779, Ser780, Gln820, and Glu832. Mg(2+)-binding residues include Gln820, Glu832, and Asn834. 3 residues coordinate Mn(2+): Gln820, Glu832, and Asn834. The MGS-like domain occupies 930-1058 (SHLSEFGQIV…ESRCFNIEAI (129 aa)). The allosteric domain stretch occupies residues 930–1058 (SHLSEFGQIV…ESRCFNIEAI (129 aa)).

The protein belongs to the CarB family. Composed of two chains; the small (or glutamine) chain promotes the hydrolysis of glutamine to ammonia, which is used by the large (or ammonia) chain to synthesize carbamoyl phosphate. Tetramer of heterodimers (alpha,beta)4. The cofactor is Mg(2+). Mn(2+) is required as a cofactor.

It carries out the reaction hydrogencarbonate + L-glutamine + 2 ATP + H2O = carbamoyl phosphate + L-glutamate + 2 ADP + phosphate + 2 H(+). The catalysed reaction is hydrogencarbonate + NH4(+) + 2 ATP = carbamoyl phosphate + 2 ADP + phosphate + 2 H(+). It functions in the pathway amino-acid biosynthesis; L-arginine biosynthesis; carbamoyl phosphate from bicarbonate: step 1/1. Its pathway is pyrimidine metabolism; UMP biosynthesis via de novo pathway; (S)-dihydroorotate from bicarbonate: step 1/3. Functionally, large subunit of the glutamine-dependent carbamoyl phosphate synthetase (CPSase). CPSase catalyzes the formation of carbamoyl phosphate from the ammonia moiety of glutamine, carbonate, and phosphate donated by ATP, constituting the first step of 2 biosynthetic pathways, one leading to arginine and/or urea and the other to pyrimidine nucleotides. The large subunit (synthetase) binds the substrates ammonia (free or transferred from glutamine from the small subunit), hydrogencarbonate and ATP and carries out an ATP-coupled ligase reaction, activating hydrogencarbonate by forming carboxy phosphate which reacts with ammonia to form carbamoyl phosphate. The protein is Carbamoyl phosphate synthase large chain of Streptococcus pyogenes serotype M3 (strain ATCC BAA-595 / MGAS315).